The sequence spans 250 residues: 4-hydroxy-tetrahydrodipicolinate reductase (250 aa).

Residues 10–15 (GVKGRI), 78–80 (GTT), and 105–108 (APNF) each bind NAD(+). Residue histidine 135 is the Proton donor/acceptor of the active site. Position 136 (histidine 136) interacts with (S)-2,3,4,5-tetrahydrodipicolinate. Residue lysine 139 is the Proton donor of the active site. 145–146 (GT) is a (S)-2,3,4,5-tetrahydrodipicolinate binding site.

Belongs to the DapB family.

Its subcellular location is the cytoplasm. It carries out the reaction (S)-2,3,4,5-tetrahydrodipicolinate + NAD(+) + H2O = (2S,4S)-4-hydroxy-2,3,4,5-tetrahydrodipicolinate + NADH + H(+). The enzyme catalyses (S)-2,3,4,5-tetrahydrodipicolinate + NADP(+) + H2O = (2S,4S)-4-hydroxy-2,3,4,5-tetrahydrodipicolinate + NADPH + H(+). The protein operates within amino-acid biosynthesis; L-lysine biosynthesis via DAP pathway; (S)-tetrahydrodipicolinate from L-aspartate: step 4/4. Functionally, catalyzes the conversion of 4-hydroxy-tetrahydrodipicolinate (HTPA) to tetrahydrodipicolinate. This chain is 4-hydroxy-tetrahydrodipicolinate reductase, found in Streptomyces avermitilis (strain ATCC 31267 / DSM 46492 / JCM 5070 / NBRC 14893 / NCIMB 12804 / NRRL 8165 / MA-4680).